The following is a 151-amino-acid chain: Transcriptional repressor NrdR (151 aa).

A zinc finger spans residues 3–34 (CPFCGYSESKVVDSRSTEDNMAIRRRRECLEC). One can recognise an ATP-cone domain in the interval 49–139 (ILVIKKDSSR…VYRQFKDINT (91 aa)).

It belongs to the NrdR family. Requires Zn(2+) as cofactor.

Negatively regulates transcription of bacterial ribonucleotide reductase nrd genes and operons by binding to NrdR-boxes. In Clostridium acetobutylicum (strain ATCC 824 / DSM 792 / JCM 1419 / IAM 19013 / LMG 5710 / NBRC 13948 / NRRL B-527 / VKM B-1787 / 2291 / W), this protein is Transcriptional repressor NrdR.